We begin with the raw amino-acid sequence, 500 residues long: Pyruvate kinase 1 (500 aa).

Residue Ser2 is modified to N-acetylserine. Phosphoserine occurs at positions 9 and 16. Position 31 is a phosphothreonine (Thr31). Position 49 (Arg49) interacts with substrate. K(+)-binding residues include Asn51 and Ser53. 51-54 (NFSH) contacts ATP. The residue at position 70 (Ser70) is a Phosphoserine. 2 residues coordinate K(+): Asp84 and Thr85. Residue Arg91 coordinates ATP. Residues Lys119, Lys124, Lys161, Lys164, and Lys166 each participate in a glycyl lysine isopeptide (Lys-Gly) (interchain with G-Cter in URM1) cross-link. Lys177 provides a ligand contact to ATP. Thr184 bears the Phosphothreonine mark. Residue Lys204 forms a Glycyl lysine isopeptide (Lys-Gly) (interchain with G-Cter in ubiquitin) linkage. At Ser213 the chain carries Phosphoserine. Lys240 contacts substrate. Mn(2+) is bound at residue Glu242. A Glycyl lysine isopeptide (Lys-Gly) (interchain with G-Cter in ubiquitin) cross-link involves residue Lys255. Gly265 and Asp266 together coordinate substrate. Asp266 contacts Mn(2+). A Glycyl lysine isopeptide (Lys-Gly) (interchain with G-Cter in URM1) cross-link involves residue Lys292. A substrate-binding site is contributed by Thr298. Ser316 carries the phosphoserine modification. A Glycyl lysine isopeptide (Lys-Gly) (interchain with G-Cter in URM1) cross-link involves residue Lys394. Beta-D-fructose 1,6-bisphosphate is bound at residue 402–407 (STSGTT). Residue Cys418 is modified to Cysteine persulfide. Residue Lys446 forms a Glycyl lysine isopeptide (Lys-Gly) (interchain with G-Cter in ubiquitin); alternate linkage. Residue Lys446 forms a Glycyl lysine isopeptide (Lys-Gly) (interchain with G-Cter in URM1); alternate linkage. Ser450 carries the phosphoserine modification. Beta-D-fructose 1,6-bisphosphate-binding residues include Trp452 and Arg459. The residue at position 478 (Thr478) is a Phosphothreonine. Gly484 is a beta-D-fructose 1,6-bisphosphate binding site.

This sequence belongs to the pyruvate kinase family. In terms of assembly, homotetramer. Mg(2+) is required as a cofactor. K(+) serves as cofactor. Conjugated to URM1, a ubiquitin-like protein, in response to oxidative stresses. The attachment of URM1 to lysine residues exclusively depends on the presence of a peroxidatic cysteine in the target protein, with low specificity for the particular residue, motif, or structural context at which urmylation can occur. The URM1-conjugation reaction is mechanistically and directly coupled to the process of cysteine persulfidation, transfering the sulfur atom of the URM1 thiocarboxyl group to redox-active cysteine residues in the target protein if it is exposed to oxidative conditions. In terms of processing, persulfidated on specific redox-active cysteine residues. Persulfidation (also called protein S-sulfhydration) may provide a molecular mechanism that enables cells to protect vulnerable cysteine residues from reactive oxygen species (ROS) under stress conditions.

The catalysed reaction is pyruvate + ATP = phosphoenolpyruvate + ADP + H(+). It participates in carbohydrate degradation; glycolysis; pyruvate from D-glyceraldehyde 3-phosphate: step 5/5. With respect to regulation, the activity is regulated by glucose levels. Activated by fructose-1,6-bisphosphate. This Saccharomyces cerevisiae (strain ATCC 204508 / S288c) (Baker's yeast) protein is Pyruvate kinase 1 (CDC19).